The sequence spans 720 residues: Polyribonucleotide nucleotidyltransferase (720 aa).

Mg(2+) contacts are provided by D487 and D493. Positions 554–613 constitute a KH domain; sequence PRITTISIPKEKIREVIGTGGKVIREICEQTGAKIDIDDDGTIKVASVDADAAQRAIDWI. Residues 623-691 form the S1 motif domain; it reads GVIYNGKVVK…DRGKVKLSMK (69 aa). The interval 695 to 720 is disordered; that stretch reads QTTGEDISAQLEAERAASKRERHHED. A compositionally biased stretch (basic and acidic residues) spans 706–720; that stretch reads EAERAASKRERHHED.

This sequence belongs to the polyribonucleotide nucleotidyltransferase family. Mg(2+) serves as cofactor.

The protein resides in the cytoplasm. It catalyses the reaction RNA(n+1) + phosphate = RNA(n) + a ribonucleoside 5'-diphosphate. Its function is as follows. Involved in mRNA degradation. Catalyzes the phosphorolysis of single-stranded polyribonucleotides processively in the 3'- to 5'-direction. This chain is Polyribonucleotide nucleotidyltransferase, found in Paramagnetospirillum magneticum (strain ATCC 700264 / AMB-1) (Magnetospirillum magneticum).